Reading from the N-terminus, the 327-residue chain is G-protein coupled receptor 55 (327 aa).

Residues Met-1–Thr-20 are Extracellular-facing. The N-linked (GlcNAc...) asparagine glycan is linked to Asn-8. The chain crosses the membrane as a helical span at residues Leu-21–Ile-41. The Cytoplasmic segment spans residues Arg-42–Ala-57. Residues Thr-58–Phe-78 traverse the membrane as a helical segment. At Lys-79 to Cys-93 the chain is on the extracellular side. A helical transmembrane segment spans residues Thr-94–Ile-114. The Cytoplasmic segment spans residues Ser-115–Lys-136. A helical membrane pass occupies residues Thr-137 to Thr-157. The Extracellular segment spans residues Phe-158–Ser-179. An N-linked (GlcNAc...) asparagine glycan is attached at Asn-170. Residues Val-180–Ser-200 form a helical membrane-spanning segment. The Cytoplasmic segment spans residues Tyr-201–Asn-239. The helical transmembrane segment at Leu-240–Val-260 threads the bilayer. Residues Arg-261–Gln-279 lie on the Extracellular side of the membrane. The chain crosses the membrane as a helical span at residues Leu-280–Ile-300. Over Lys-301–Gly-327 the chain is Cytoplasmic.

It belongs to the G-protein coupled receptor 1 family. Highly expressed in splenic plasma cells.

The protein localises to the cell membrane. In terms of biological role, G-protein coupled receptor that binds to several ligands including 2-arachidonoyl lysophosphatidylinositol or lysophosphatidylglucoside with high affinity, leading to rapid and transient activation of numerous intracellular signaling pathways. Induces the Ca(2+) release from intracellular stores via ERK, the heterotrimeric G protein GNA13 and RHOA leading to morphological changes including cell rounding and stress fiber formation. In macrophages, acts downstream of lysophosphatidylglucoside to inhibit the translocation of the phospholipid-transporting ABCA1 to plasma membrane and subsequent cholesterol efflux leading to lipid accumulation and foam cell formation. May be involved in hyperalgesia associated with inflammatory and neuropathic pain. The protein is G-protein coupled receptor 55 (Gpr55) of Mus musculus (Mouse).